We begin with the raw amino-acid sequence, 228 residues long: Ribonuclease H (228 aa).

The 141-residue stretch at 2 to 142 (GPMRTIVYAD…ADRLATLGRR (141 aa)) folds into the RNase H type-1 domain. Positions 11, 49, 71, and 134 each coordinate Mg(2+).

It belongs to the RNase H family. Monomer. The cofactor is Mg(2+).

The protein resides in the cytoplasm. It carries out the reaction Endonucleolytic cleavage to 5'-phosphomonoester.. Endonuclease that specifically degrades the RNA of RNA-DNA hybrids. The chain is Ribonuclease H from Methylorubrum extorquens (strain PA1) (Methylobacterium extorquens).